The chain runs to 303 residues: Dehydrodolichyl diphosphate synthase 1 (303 aa).

The helical transmembrane segment at 14 to 34 (LLFLFLIPCLFITSYIGFPVF) threads the bilayer.

This sequence belongs to the UPP synthase family. Mg(2+) serves as cofactor. As to expression, expressed in low levels in the whole plant. Preferentially expressed in roots.

Its subcellular location is the endoplasmic reticulum membrane. It catalyses the reaction n isopentenyl diphosphate + (2E,6E)-farnesyl diphosphate = a di-trans,poly-cis-polyprenyl diphosphate + n diphosphate. It participates in protein modification; protein glycosylation. Catalyzes cis-prenyl chain elongation to produce the polyprenyl backbone of dolichol, a glycosyl carrier-lipid required for the biosynthesis of several classes of glycoprotein. The chain is Dehydrodolichyl diphosphate synthase 1 (DPS) from Arabidopsis thaliana (Mouse-ear cress).